A 369-amino-acid polypeptide reads, in one-letter code: Capsid protein (369 aa).

It localises to the host nucleus. The protein resides in the virion. In terms of biological role, self-assembles to form the virion icosahedral capsid. The sequence is that of Capsid protein from Avon-Heathcote Estuary associated kieseladnavirus (AHEaBV).